Reading from the N-terminus, the 509-residue chain is tRNA-2-methylthio-N(6)-dimethylallyladenosine synthase (509 aa).

Residues 1 to 15 (MNEQQRLASQQVNSS) show a composition bias toward polar residues. Residues 1–26 (MNEQQRLASQQVNSSTKKEEKDYSKY) form a disordered region. Positions 16–25 (TKKEEKDYSK) are enriched in basic and acidic residues. Positions 66–184 (RKFYIRTYGC…LPYILKDAMF (119 aa)) constitute an MTTase N-terminal domain. The [4Fe-4S] cluster site is built by Cys75, Cys111, Cys145, Cys221, Cys225, and Cys228. The Radical SAM core domain maps to 207 to 437 (RRGDIKAWVN…NALVNKLAIE (231 aa)). The TRAM domain maps to 440–503 (NRYKGQIVEV…TWSLNGELVE (64 aa)).

The protein belongs to the methylthiotransferase family. MiaB subfamily. In terms of assembly, monomer. [4Fe-4S] cluster serves as cofactor.

The protein localises to the cytoplasm. It carries out the reaction N(6)-dimethylallyladenosine(37) in tRNA + (sulfur carrier)-SH + AH2 + 2 S-adenosyl-L-methionine = 2-methylsulfanyl-N(6)-dimethylallyladenosine(37) in tRNA + (sulfur carrier)-H + 5'-deoxyadenosine + L-methionine + A + S-adenosyl-L-homocysteine + 2 H(+). Catalyzes the methylthiolation of N6-(dimethylallyl)adenosine (i(6)A), leading to the formation of 2-methylthio-N6-(dimethylallyl)adenosine (ms(2)i(6)A) at position 37 in tRNAs that read codons beginning with uridine. The protein is tRNA-2-methylthio-N(6)-dimethylallyladenosine synthase of Bacillus cereus (strain AH187).